Consider the following 157-residue polypeptide: Putative low molecular weight protein-tyrosine-phosphatase slr0328 (157 aa).

C7 acts as the Nucleophile in catalysis. The active site involves R13. Residue D124 is the Proton donor of the active site.

Belongs to the low molecular weight phosphotyrosine protein phosphatase family.

It carries out the reaction O-phospho-L-tyrosyl-[protein] + H2O = L-tyrosyl-[protein] + phosphate. This chain is Putative low molecular weight protein-tyrosine-phosphatase slr0328, found in Synechocystis sp. (strain ATCC 27184 / PCC 6803 / Kazusa).